The primary structure comprises 240 residues: Adapter protein MecA (240 aa).

The disordered stretch occupies residues 118-138 (EQRAQQQKHSHKSEQKQTKQR).

This sequence belongs to the MecA family. In terms of assembly, homodimer.

Functionally, enables the recognition and targeting of unfolded and aggregated proteins to the ClpC protease or to other proteins involved in proteolysis. The polypeptide is Adapter protein MecA (Staphylococcus haemolyticus (strain JCSC1435)).